We begin with the raw amino-acid sequence, 616 residues long: UvrABC system protein C (616 aa).

In terms of domain architecture, GIY-YIG spans 12–91 (ESPGVYLWKD…IKEYHPRFNI (80 aa)). The region spanning 202-237 (SDVMHHVRERMLDASERLDFERAAELRDALAHLEKM) is the UVR domain.

This sequence belongs to the UvrC family. Interacts with UvrB in an incision complex.

The protein resides in the cytoplasm. Functionally, the UvrABC repair system catalyzes the recognition and processing of DNA lesions. UvrC both incises the 5' and 3' sides of the lesion. The N-terminal half is responsible for the 3' incision and the C-terminal half is responsible for the 5' incision. This Gemmatimonas aurantiaca (strain DSM 14586 / JCM 11422 / NBRC 100505 / T-27) protein is UvrABC system protein C.